We begin with the raw amino-acid sequence, 89 residues long: uncharacterized protein (89 aa).

The signal sequence occupies residues 1–19 (MQLTKTQFVRCVFLLLANS).

This is an uncharacterized protein from Sulfolobus islandicus filamentous virus (isolate Iceland/Hveragerdi) (SIFV).